A 402-amino-acid polypeptide reads, in one-letter code: CCA-adding enzyme (402 aa).

2 residues coordinate ATP: G32 and R35. 2 residues coordinate CTP: G32 and R35. Positions 45 and 47 each coordinate Mg(2+). ATP is bound by residues R116, D159, R162, R165, and R168. R116, D159, R162, R165, and R168 together coordinate CTP.

Belongs to the tRNA nucleotidyltransferase/poly(A) polymerase family. Bacterial CCA-adding enzyme type 3 subfamily. Homodimer. Mg(2+) is required as a cofactor.

It catalyses the reaction a tRNA precursor + 2 CTP + ATP = a tRNA with a 3' CCA end + 3 diphosphate. It carries out the reaction a tRNA with a 3' CCA end + 2 CTP + ATP = a tRNA with a 3' CCACCA end + 3 diphosphate. Functionally, catalyzes the addition and repair of the essential 3'-terminal CCA sequence in tRNAs without using a nucleic acid template. Adds these three nucleotides in the order of C, C, and A to the tRNA nucleotide-73, using CTP and ATP as substrates and producing inorganic pyrophosphate. tRNA 3'-terminal CCA addition is required both for tRNA processing and repair. Also involved in tRNA surveillance by mediating tandem CCA addition to generate a CCACCA at the 3' terminus of unstable tRNAs. While stable tRNAs receive only 3'-terminal CCA, unstable tRNAs are marked with CCACCA and rapidly degraded. This chain is CCA-adding enzyme, found in Streptococcus pyogenes serotype M1.